The primary structure comprises 257 residues: Imidazole glycerol phosphate synthase subunit HisF (257 aa).

Active-site residues include aspartate 11 and aspartate 130.

It belongs to the HisA/HisF family. Heterodimer of HisH and HisF.

The protein localises to the cytoplasm. It carries out the reaction 5-[(5-phospho-1-deoxy-D-ribulos-1-ylimino)methylamino]-1-(5-phospho-beta-D-ribosyl)imidazole-4-carboxamide + L-glutamine = D-erythro-1-(imidazol-4-yl)glycerol 3-phosphate + 5-amino-1-(5-phospho-beta-D-ribosyl)imidazole-4-carboxamide + L-glutamate + H(+). It participates in amino-acid biosynthesis; L-histidine biosynthesis; L-histidine from 5-phospho-alpha-D-ribose 1-diphosphate: step 5/9. IGPS catalyzes the conversion of PRFAR and glutamine to IGP, AICAR and glutamate. The HisF subunit catalyzes the cyclization activity that produces IGP and AICAR from PRFAR using the ammonia provided by the HisH subunit. This is Imidazole glycerol phosphate synthase subunit HisF from Actinobacillus pleuropneumoniae serotype 7 (strain AP76).